The primary structure comprises 83 residues: Mu-theraphotoxin-Hhn2b 1 (83 aa).

Positions 1 to 21 (MKASMFLALAGLVLLFVVCYA) are cleaved as a signal peptide. Residues 22–48 (SESEEKEFPRELISKIFAVDDFKGEER) constitute a propeptide that is removed on maturation. Cystine bridges form between Cys-50–Cys-65, Cys-57–Cys-70, and Cys-64–Cys-77. Residue Leu-81 is modified to Leucine amide.

It belongs to the neurotoxin 10 (Hwtx-1) family. 14 (Hntx-1) subfamily. As to quaternary structure, monomer. In terms of tissue distribution, expressed by the venom gland.

It is found in the secreted. Functionally, weakly blocks the rat SCN2A/SCN1B (Nav1.2/beta-1) sodium channel (IC(50)=68 uM) and the insect sodium channel para/tipE (IC(50)=4.3 uM), without altering the activation or inactivation kinetics (depressant toxin). This Cyriopagopus hainanus (Chinese bird spider) protein is Mu-theraphotoxin-Hhn2b 1.